The primary structure comprises 103 residues: Histone H4 variant TH091 (103 aa).

Residues 1–20 form a disordered region; the sequence is MSGRDKGGKGLGKGGAKRHR. Residue Ser2 is modified to N-acetylserine. N6-acetyllysine occurs at positions 6, 9, 13, 17, and 21. The DNA-binding element occupies 17–21; the sequence is KRHRK.

The protein belongs to the histone H4 family. In terms of assembly, the nucleosome is a histone octamer containing two molecules each of H2A, H2B, H3 and H4 assembled in one H3-H4 heterotetramer and two H2A-H2B heterodimers. The octamer wraps approximately 147 bp of DNA.

The protein localises to the nucleus. Its subcellular location is the chromosome. Core component of nucleosome. Nucleosomes wrap and compact DNA into chromatin, limiting DNA accessibility to the cellular machineries which require DNA as a template. Histones thereby play a central role in transcription regulation, DNA repair, DNA replication and chromosomal stability. DNA accessibility is regulated via a complex set of post-translational modifications of histones, also called histone code, and nucleosome remodeling. The chain is Histone H4 variant TH091 from Triticum aestivum (Wheat).